We begin with the raw amino-acid sequence, 246 residues long: DNA repair protein RecO (246 aa).

It belongs to the RecO family.

Involved in DNA repair and RecF pathway recombination. In Pelobacter propionicus (strain DSM 2379 / NBRC 103807 / OttBd1), this protein is DNA repair protein RecO.